Consider the following 1322-residue polypeptide: Putative DNA ligase 4 (1322 aa).

ATP-binding residues include glutamate 265, lysine 267, arginine 272, arginine 287, glutamate 317, phenylalanine 387, glutamate 497, lysine 502, arginine 513, lysine 519, and lysine 521. Residue lysine 267 is the N6-AMP-lysine intermediate of the active site. Glutamate 317 is a binding site for Mg(2+). Position 497 (glutamate 497) interacts with Mg(2+). BRCT domains are found at residues 686–768 (LDVQ…PKFD) and 825–935 (ERFC…TYSL). 2 disordered regions span residues 945-1212 (IERS…SATC) and 1245-1310 (AEAK…KKVS). A compositionally biased stretch (basic and acidic residues) spans 957-969 (DKLEENEKADTSH). Composition is skewed to basic residues over residues 970–979 (VKHAPRKRGR) and 994–1005 (PVRRTRARRGNQ). Basic and acidic residues-rich tracts occupy residues 1007-1022 (AKID…HGET) and 1033-1047 (NISK…KDQV). Positions 1051–1063 (PVRRTRARRGKQH) are enriched in basic residues. 3 stretches are compositionally biased toward basic and acidic residues: residues 1082-1104 (DDQR…RDQG), 1125-1161 (AKID…KDQE), and 1190-1204 (PKHE…RDTA). Residues 1261 to 1288 (SSYVAPVPQASASSASSSGVPAPHAGSS) show a composition bias toward low complexity.

The protein belongs to the ATP-dependent DNA ligase family. The cofactor is Mg(2+).

Its subcellular location is the nucleus. The catalysed reaction is ATP + (deoxyribonucleotide)n-3'-hydroxyl + 5'-phospho-(deoxyribonucleotide)m = (deoxyribonucleotide)n+m + AMP + diphosphate.. Functionally, DNA ligase involved in DNA non-homologous end joining (NHEJ); required for double-strand break (DSB) repair. The chain is Putative DNA ligase 4 (LIG4) from Oryza sativa subsp. japonica (Rice).